The sequence spans 289 residues: Elongation factor Ts (289 aa).

The segment at 82–85 (TDFL) is involved in Mg(2+) ion dislocation from EF-Tu.

This sequence belongs to the EF-Ts family.

The protein localises to the cytoplasm. In terms of biological role, associates with the EF-Tu.GDP complex and induces the exchange of GDP to GTP. It remains bound to the aminoacyl-tRNA.EF-Tu.GTP complex up to the GTP hydrolysis stage on the ribosome. The sequence is that of Elongation factor Ts from Azotobacter vinelandii (strain DJ / ATCC BAA-1303).